Consider the following 233-residue polypeptide: Probable histidinol-phosphatase (233 aa).

The protein belongs to the PHP hydrolase family. HisK subfamily.

It catalyses the reaction L-histidinol phosphate + H2O = L-histidinol + phosphate. It participates in amino-acid biosynthesis; L-histidine biosynthesis; L-histidine from 5-phospho-alpha-D-ribose 1-diphosphate: step 8/9. This chain is Probable histidinol-phosphatase (hisK), found in Thermotoga maritima (strain ATCC 43589 / DSM 3109 / JCM 10099 / NBRC 100826 / MSB8).